A 401-amino-acid chain; its full sequence is Chalcone synthase 4 (401 aa).

Cysteine 168 is an active-site residue.

It belongs to the thiolase-like superfamily. Chalcone/stilbene synthases family.

It catalyses the reaction (E)-4-coumaroyl-CoA + 3 malonyl-CoA + 3 H(+) = 2',4,4',6'-tetrahydroxychalcone + 3 CO2 + 4 CoA. The protein operates within secondary metabolite biosynthesis; flavonoid biosynthesis. Its function is as follows. The primary product of this enzyme is 4,2',4',6'-tetrahydroxychalcone (also termed naringenin-chalcone or chalcone) which can under specific conditions spontaneously isomerize into naringenin. This is Chalcone synthase 4 (CHS4) from Sorghum bicolor (Sorghum).